The primary structure comprises 514 residues: Peptide chain release factor 3 (514 aa).

Residues 8–268 form the tr-type G domain; the sequence is KKRRTFAIIS…TFLKFAPEPH (261 aa). GTP-binding positions include 17–24, 85–89, and 139–142; these read SHPDAGKT, DTPGH, and NKLD.

It belongs to the TRAFAC class translation factor GTPase superfamily. Classic translation factor GTPase family. PrfC subfamily.

It localises to the cytoplasm. Increases the formation of ribosomal termination complexes and stimulates activities of RF-1 and RF-2. It binds guanine nucleotides and has strong preference for UGA stop codons. It may interact directly with the ribosome. The stimulation of RF-1 and RF-2 is significantly reduced by GTP and GDP, but not by GMP. This is Peptide chain release factor 3 from Streptococcus pneumoniae serotype 19F (strain G54).